Consider the following 575-residue polypeptide: Carboxylesterase 5A (575 aa).

The signal sequence occupies residues 1–28 (MSGDWVRPGQALIWVIWIFGAIIEGSVT). A disulfide bridge connects residues Cys-94 and Cys-121. An N-linked (GlcNAc...) asparagine glycan is attached at Asn-134. Catalysis depends on Ser-226, which acts as the Acyl-ester intermediate. The cysteines at positions 280 and 291 are disulfide-linked. N-linked (GlcNAc...) asparagine glycosylation occurs at Asn-281. Glu-345 acts as the Charge relay system in catalysis. An N-linked (GlcNAc...) asparagine glycan is attached at Asn-363. His-454 acts as the Charge relay system in catalysis. The N-linked (GlcNAc...) asparagine glycan is linked to Asn-524.

This sequence belongs to the type-B carboxylesterase/lipase family. N-glycosylated.

It localises to the secreted. It catalyses the reaction a carboxylic ester + H2O = an alcohol + a carboxylate + H(+). In terms of biological role, involved in the detoxification of xenobiotics and in the activation of ester and amide prodrugs. In Mus musculus (Mouse), this protein is Carboxylesterase 5A (Ces5a).